The primary structure comprises 146 residues: Meiotically up-regulated gene 151 protein (146 aa).

Residues 1–40 (MSLVAYDSEEEEQTSLVNENNDIKGRSEEPHWKIPNSPKA) form a disordered region. The segment covering 21 to 32 (NDIKGRSEEPHW) has biased composition (basic and acidic residues).

It is found in the nucleus. In terms of biological role, has a role in meiosis. In Schizosaccharomyces pombe (strain 972 / ATCC 24843) (Fission yeast), this protein is Meiotically up-regulated gene 151 protein (mug151).